The sequence spans 360 residues: BLOC-1-related complex subunit 6 (360 aa).

A disordered region spans residues Met-1–Thr-201. Over residues Ala-23 to Pro-33 the composition is skewed to polar residues. Phosphothreonine is present on Thr-41. Residue Ser-130 is modified to Phosphoserine. Over residues Glu-144–Ala-155 the composition is skewed to acidic residues. Ser-173 carries the phosphoserine modification. The span at Gly-179–Arg-198 shows a compositional bias: gly residues. Thr-201 is modified (phosphothreonine). Phosphoserine is present on Ser-204.

It belongs to the BORCS6 family. In terms of assembly, component of the BLOC-one-related complex (BORC) which is composed of BLOC1S1, BLOC1S2, BORCS5, BORCS6, BORCS7, BORCS8, KXD1 and SNAPIN.

It is found in the lysosome membrane. Its function is as follows. As part of the BORC complex may play a role in lysosomes movement and localization at the cell periphery. Associated with the cytosolic face of lysosomes, the BORC complex may recruit ARL8B and couple lysosomes to microtubule plus-end-directed kinesin motor. This chain is BLOC-1-related complex subunit 6, found in Mus musculus (Mouse).